The following is a 91-amino-acid chain: MEKQCSKFIVSGHVQGVGFRYHTSHQGLKLGLTGYAKNLNNGDVEVVACGTPERLEELYLWLQEGPKTASVRQVRRLSSELEHDYQGFEIL.

The Acylphosphatase-like domain occupies 5–91 (CSKFIVSGHV…EHDYQGFEIL (87 aa)). Catalysis depends on residues arginine 20 and asparagine 38.

Belongs to the acylphosphatase family.

The enzyme catalyses an acyl phosphate + H2O = a carboxylate + phosphate + H(+). This Vibrio cholerae serotype O1 (strain ATCC 39315 / El Tor Inaba N16961) protein is Acylphosphatase (acyP).